Consider the following 275-residue polypeptide: Phosphatidylglycerol--prolipoprotein diacylglyceryl transferase (275 aa).

4 consecutive transmembrane segments (helical) span residues 20–40 (FTIH…LLLA), 58–78 (LLWA…VFQW), 88–108 (IIAI…GFIV), and 118–138 (LSSW…QGIG). Arg-139 is an a 1,2-diacyl-sn-glycero-3-phospho-(1'-sn-glycerol) binding site. 2 helical membrane passes run 209–229 (GEIF…IEGM) and 239–259 (IRIS…ILII).

This sequence belongs to the Lgt family.

The protein localises to the cell membrane. It carries out the reaction L-cysteinyl-[prolipoprotein] + a 1,2-diacyl-sn-glycero-3-phospho-(1'-sn-glycerol) = an S-1,2-diacyl-sn-glyceryl-L-cysteinyl-[prolipoprotein] + sn-glycerol 1-phosphate + H(+). It functions in the pathway protein modification; lipoprotein biosynthesis (diacylglyceryl transfer). Functionally, catalyzes the transfer of the diacylglyceryl group from phosphatidylglycerol to the sulfhydryl group of the N-terminal cysteine of a prolipoprotein, the first step in the formation of mature lipoproteins. This chain is Phosphatidylglycerol--prolipoprotein diacylglyceryl transferase, found in Limosilactobacillus reuteri (strain DSM 20016) (Lactobacillus reuteri).